The following is a 253-amino-acid chain: VTSITLDLVNPTAGQYSSFVDKIRNNVKDPNLKYGGTDIAVIGPPSKEKFLRINFQSSRGTVSLGLKRDNLYVVAYLAMDNTNVNRAYYFRSEITSAELTALFPEATTANQKALEYTEDYQSIEKNAQITQGDKSRKELGLGIDLLLTSMEAVNKKARVVKNEARFLLIAIQMTAEVARFRYIQNLVTKNFPNKFDSDNKVIQFEVSWRKISTAIYGDAKNGVFNKDYDFGFGKVRQVKDLQMGLLMYLGKPK.

Glu176 is an active-site residue.

This sequence belongs to the ribosome-inactivating protein family. Type 1 RIP subfamily.

The catalysed reaction is Endohydrolysis of the N-glycosidic bond at one specific adenosine on the 28S rRNA.. Ribosome-inactivating protein of type 1, inhibits protein synthesis in animal cells. The sequence is that of Ribosome-inactivating protein saporin-5 (SAP5) from Saponaria officinalis (Common soapwort).